Reading from the N-terminus, the 263-residue chain is Peptide methionine sulfoxide reductase A4, chloroplastic (263 aa).

The transit peptide at 1 to 75 (MPPLLASTSS…GLGGLGGSPR (75 aa)) directs the protein to the chloroplast.

It belongs to the MsrA Met sulfoxide reductase family. In terms of tissue distribution, expressed in roots, stems, leaves and flowers.

It localises to the plastid. The protein localises to the chloroplast. The enzyme catalyses L-methionyl-[protein] + [thioredoxin]-disulfide + H2O = L-methionyl-(S)-S-oxide-[protein] + [thioredoxin]-dithiol. The catalysed reaction is [thioredoxin]-disulfide + L-methionine + H2O = L-methionine (S)-S-oxide + [thioredoxin]-dithiol. In terms of biological role, catalyzes the reduction of methionine sulfoxide (MetSO) to methionine in proteins. Involved in abiotic and salt stress responses. Plays a protective role against oxidative stress by restoring activity to proteins that have been inactivated by methionine oxidation. MSRA family specifically reduces the MetSO S-enantiomer. The sequence is that of Peptide methionine sulfoxide reductase A4, chloroplastic from Oryza sativa subsp. japonica (Rice).